The chain runs to 158 residues: uncharacterized protein (158 aa).

The segment at Arg109–Thr143 adopts an FPG-type zinc-finger fold.

This is an uncharacterized protein from Mycobacterium tuberculosis (strain ATCC 25618 / H37Rv).